The primary structure comprises 255 residues: Hydroxyacylglutathione hydrolase (255 aa).

Residues His53, His55, Asp57, His58, His110, Asp127, and His165 each contribute to the Zn(2+) site.

This sequence belongs to the metallo-beta-lactamase superfamily. Glyoxalase II family. Monomer. Zn(2+) serves as cofactor.

The catalysed reaction is an S-(2-hydroxyacyl)glutathione + H2O = a 2-hydroxy carboxylate + glutathione + H(+). The protein operates within secondary metabolite metabolism; methylglyoxal degradation; (R)-lactate from methylglyoxal: step 2/2. Thiolesterase that catalyzes the hydrolysis of S-D-lactoyl-glutathione to form glutathione and D-lactic acid. This chain is Hydroxyacylglutathione hydrolase, found in Xanthomonas euvesicatoria pv. vesicatoria (strain 85-10) (Xanthomonas campestris pv. vesicatoria).